A 396-amino-acid polypeptide reads, in one-letter code: tRNA-specific 2-thiouridylase MnmA (396 aa).

Residues 42-49 (GMSGGVDS) and M68 contribute to the ATP site. An interaction with target base in tRNA region spans residues 128–130 (NPD). C133 acts as the Nucleophile in catalysis. A disulfide bridge connects residues C133 and C230. Position 158 (G158) interacts with ATP. Residues 180-182 (KDQ) are interaction with tRNA. Residue C230 is the Cysteine persulfide intermediate of the active site. The segment at 342-343 (RY) is interaction with tRNA.

This sequence belongs to the MnmA/TRMU family.

The protein resides in the cytoplasm. The enzyme catalyses S-sulfanyl-L-cysteinyl-[protein] + uridine(34) in tRNA + AH2 + ATP = 2-thiouridine(34) in tRNA + L-cysteinyl-[protein] + A + AMP + diphosphate + H(+). Its function is as follows. Catalyzes the 2-thiolation of uridine at the wobble position (U34) of tRNA, leading to the formation of s(2)U34. This Pseudoalteromonas atlantica (strain T6c / ATCC BAA-1087) protein is tRNA-specific 2-thiouridylase MnmA.